Consider the following 414-residue polypeptide: 2-acylphloroglucinol 4-prenyltransferase (414 aa).

The transit peptide at 1–86 (MELSSVSSFS…LKPLSIFSCK (86 aa)) directs the protein to the chloroplast. The next 8 membrane-spanning stretches (helical) occupy residues 153-173 (FSWPLIFRALLGMLAILGSCF), 201-221 (ISVESAWLLTLSPAIIGFILI), 229-249 (LLTSLYCLAILSGTIYSVPPF), 256-276 (ITAFLCILMIHAGLNFSVYYA), 281-301 (LGLAFVWSPSFSFITAFITFM), 336-356 (LLGTGLLLLNYVAAISTAIIW), 359-379 (AFKSNIMLLSHAILAFSLFFQ), and 394-414 (KSFYEFIWILFSAEYVVYLFI).

The protein belongs to the UbiA prenyltransferase family. Component an active demethylxanthohumol (DMX) biosynthetic metabolon in glandular trichomes (lupulin glands) that encompasses a chalcone synthase (CHS) and a membrane-bound prenyltransferase. Interacts with PT2, forming a functional metabolon. Interacts with CHIL2; this interaction promotes catalytic activity. The cofactor is Mg(2+). As to expression, expressed in trichomes.

It is found in the plastid. The protein localises to the chloroplast membrane. It catalyses the reaction 2',4,4',6'-tetrahydroxychalcone + dimethylallyl diphosphate = desmethylxanthohumol + diphosphate. It carries out the reaction a 2-acylphloroglucinol + dimethylallyl diphosphate = a 2-acyl-4-prenylphloroglucinol + diphosphate. It functions in the pathway secondary metabolite biosynthesis. Its activity is regulated as follows. Stimulated by CHIL2 but inhibited by CHIL1. Its function is as follows. Involved in the biosynthesis of prenylated phenolics natural products which contribute to the bitter taste of beer and display broad biological activities. Catalyzes the first prenylation step in the beta-bitter acid pathway. Uses dimethylallyl diphosphate (DMAPP) as the prenyl donor. The protein is 2-acylphloroglucinol 4-prenyltransferase of Humulus lupulus (European hop).